Here is a 239-residue protein sequence, read N- to C-terminus: MMKFIKKEQIKNLGPNSKLLKQYKSQLTNLTSEQLEIGVGLLLGDAYIRSRDNGKTNCIQFEWKNKAYIDHICLKFDEWVLSPPHKKMRINHLGNEVITWGAQTFKHEAFNELSKLFIINNKKHIINNLIEDYVTPKSLAYWFMDDGGKWDYNKGSMNKSIVLNTQCFTIDEVNSLINGLNTKFKLNCSMKFNKNKPIIYIPHNSYNIYYELISPYIITEMRYKLPSYEGTSKDYNKIH.

This sequence belongs to the LAGLIDADG endonuclease family.

It localises to the mitochondrion. In terms of biological role, endonuclease involved in mitochondrial 21S rRNA gene intron homing. This is Probable intron-encoded endonuclease I-ZbiI from Zygosaccharomyces bisporus.